A 31-amino-acid chain; its full sequence is IGALQGAVDRVLTQPTQSIVRNVAVVNSLYK.

Belongs to the COG5 family. As to quaternary structure, component of the conserved oligomeric Golgi complex which is composed of eight different subunits and is required for normal Golgi morphology and localization.

Its subcellular location is the cytoplasm. It localises to the cytosol. It is found in the golgi apparatus membrane. In terms of biological role, required for normal Golgi function. In Bos taurus (Bovine), this protein is Conserved oligomeric Golgi complex subunit 5 (COG5).